Consider the following 264-residue polypeptide: 5'-nucleotidase SurE (264 aa).

A divalent metal cation contacts are provided by D12, D13, S43, and N98.

This sequence belongs to the SurE nucleotidase family. A divalent metal cation serves as cofactor.

The protein resides in the cytoplasm. The enzyme catalyses a ribonucleoside 5'-phosphate + H2O = a ribonucleoside + phosphate. Nucleotidase that shows phosphatase activity on nucleoside 5'-monophosphates. In Sulfurovum sp. (strain NBC37-1), this protein is 5'-nucleotidase SurE.